The chain runs to 458 residues: MFGTLRIGSEKNSVEFIEHAKGEAASRLGGYVFSHSACESCRLKKLRCSGHKSGCDRCRSQAMKCSYQIGAPSNSSRPKSRSHFQPNFSNMSGTAGTSKAPSPLGNDGVDREIGGWEMAETDPTGSVVTTTAQFLNSVNQGEHSNLNDLRQGQRFGGELDYSENELNDIFSNIAYLQPDDMETNVFVGAANRAVLDAEAFDSMTEPANSMSDDIGDIAASQPPSADVQSAFMAFDHARTSSSSSSHQSSDTSASDAFIATDFDGARSRTDPSTCQCRGSILRVLAEIESNILSASPSNMYAILSYLRQTTAASNDILTCRICNCRLKFFGLLGIIGEKITSLSGAIITAFVCRLKEQNESVDFGKSDSPDKRLDPNRAIQLCEFQVQSLQEFKVVSAAVIKLQLKYSVAFVSRTRELAISMNHLAQAQSLEKLESRLNELVIKMQRMVSEVDSDLCDI.

A DNA-binding region (zn(2)-C6 fungal-type) is located at residues 38-65 (CESCRLKKLRCSGHKSGCDRCRSQAMKC). The disordered stretch occupies residues 69 to 109 (IGAPSNSSRPKSRSHFQPNFSNMSGTAGTSKAPSPLGNDGV). Polar residues predominate over residues 71-100 (APSNSSRPKSRSHFQPNFSNMSGTAGTSKA).

It is found in the nucleus. Its function is as follows. Transcription factor that specifically regulates the expression of the gene cluster that mediates the biosynthesis of PR-toxin, a bicyclic sesquiterpene belonging to the eremophilane class and acting as a mycotoxin. This chain is Transcription factor ORF10, found in Penicillium roqueforti (strain FM164).